Consider the following 213-residue polypeptide: Pyridoxine/pyridoxamine 5'-phosphate oxidase (213 aa).

Residues 60–65 (RMVLMK), 75–76 (YS), lysine 82, and glutamine 104 contribute to the FMN site. A substrate-binding site is contributed by lysine 65. 3 residues coordinate substrate: tyrosine 122, arginine 126, and serine 130. FMN-binding positions include 139–140 (QS) and tryptophan 184. 190–192 (RLH) lines the substrate pocket. Arginine 194 contacts FMN.

It belongs to the pyridoxamine 5'-phosphate oxidase family. As to quaternary structure, homodimer. It depends on FMN as a cofactor.

The enzyme catalyses pyridoxamine 5'-phosphate + O2 + H2O = pyridoxal 5'-phosphate + H2O2 + NH4(+). It catalyses the reaction pyridoxine 5'-phosphate + O2 = pyridoxal 5'-phosphate + H2O2. The protein operates within cofactor metabolism; pyridoxal 5'-phosphate salvage; pyridoxal 5'-phosphate from pyridoxamine 5'-phosphate: step 1/1. Its pathway is cofactor metabolism; pyridoxal 5'-phosphate salvage; pyridoxal 5'-phosphate from pyridoxine 5'-phosphate: step 1/1. Functionally, catalyzes the oxidation of either pyridoxine 5'-phosphate (PNP) or pyridoxamine 5'-phosphate (PMP) into pyridoxal 5'-phosphate (PLP). This Rhodopseudomonas palustris (strain BisB18) protein is Pyridoxine/pyridoxamine 5'-phosphate oxidase.